A 639-amino-acid polypeptide reads, in one-letter code: tRNA uridine 5-carboxymethylaminomethyl modification enzyme MnmG (639 aa).

An FAD-binding site is contributed by 13-18 (GGGHAG). 274–288 (GPRYCPSIEDKIHRF) serves as a coordination point for NAD(+).

Belongs to the MnmG family. As to quaternary structure, homodimer. Heterotetramer of two MnmE and two MnmG subunits. FAD serves as cofactor.

Its subcellular location is the cytoplasm. Functionally, NAD-binding protein involved in the addition of a carboxymethylaminomethyl (cmnm) group at the wobble position (U34) of certain tRNAs, forming tRNA-cmnm(5)s(2)U34. This chain is tRNA uridine 5-carboxymethylaminomethyl modification enzyme MnmG, found in Polynucleobacter asymbioticus (strain DSM 18221 / CIP 109841 / QLW-P1DMWA-1) (Polynucleobacter necessarius subsp. asymbioticus).